Reading from the N-terminus, the 582-residue chain is 15-cis-phytoene desaturase, chloroplastic/chromoplastic (582 aa).

A chloroplast and chromoplast-targeting transit peptide spans 1-93 (MNLLGSISTG…ELENTINFLE (93 aa)). Residues Ala-121, 140–141 (EA), Lys-148, 165–166 (HI), and Tyr-171 each bind FAD. Arg-306 is a binding site for substrate. Asp-537 contributes to the FAD binding site. Ala-545 serves as a coordination point for substrate. Met-547 is an FAD binding site.

Belongs to the carotenoid/retinoid oxidoreductase family. Homotetramer. FAD is required as a cofactor. As to expression, expressed in flower buds and lips. Lower expression in leaves and roots.

It is found in the plastid. The protein resides in the chloroplast. Its subcellular location is the chromoplast. It localises to the membrane. It catalyses the reaction 2 a plastoquinone + 15-cis-phytoene = 9,9',15-tri-cis-zeta-carotene + 2 a plastoquinol. Its pathway is carotenoid biosynthesis; lycopene biosynthesis. Converts phytoene into zeta-carotene via the intermediary of phytofluene by the symmetrical introduction of two double bonds at the C-11 and C-11' positions of phytoene with a concomitant isomerization of two neighboring double bonds at the C9 and C9' positions from trans to cis. This Oncidium hybrid cultivar (Orchid) protein is 15-cis-phytoene desaturase, chloroplastic/chromoplastic (PDS).